The following is a 353-amino-acid chain: Methionine import ATP-binding protein MetN (353 aa).

An ABC transporter domain is found at 8 to 249; the sequence is LDQIDVTFHQ…PKQPLTQDFI (242 aa). 42–49 is an ATP binding site; it reads GYSGAGKS.

This sequence belongs to the ABC transporter superfamily. Methionine importer (TC 3.A.1.24) family. In terms of assembly, the complex is composed of two ATP-binding proteins (MetN), two transmembrane proteins (MetI) and a solute-binding protein (MetQ).

It localises to the cell membrane. It catalyses the reaction L-methionine(out) + ATP + H2O = L-methionine(in) + ADP + phosphate + H(+). The catalysed reaction is D-methionine(out) + ATP + H2O = D-methionine(in) + ADP + phosphate + H(+). Its function is as follows. Part of the ABC transporter complex MetNIQ involved in methionine import. Responsible for energy coupling to the transport system. The sequence is that of Methionine import ATP-binding protein MetN from Streptococcus pneumoniae (strain ATCC BAA-255 / R6).